Here is a 330-residue protein sequence, read N- to C-terminus: Beta-hexosaminidase (330 aa).

Residues D62, R70, R130, and 160–161 contribute to the substrate site; that span reads KH. Residue H173 is the Proton donor/acceptor of the active site. D242 acts as the Nucleophile in catalysis.

Belongs to the glycosyl hydrolase 3 family. NagZ subfamily.

Its subcellular location is the cytoplasm. It catalyses the reaction Hydrolysis of terminal non-reducing N-acetyl-D-hexosamine residues in N-acetyl-beta-D-hexosaminides.. Its pathway is cell wall biogenesis; peptidoglycan recycling. In terms of biological role, plays a role in peptidoglycan recycling by cleaving the terminal beta-1,4-linked N-acetylglucosamine (GlcNAc) from peptide-linked peptidoglycan fragments, giving rise to free GlcNAc, anhydro-N-acetylmuramic acid and anhydro-N-acetylmuramic acid-linked peptides. The sequence is that of Beta-hexosaminidase from Vibrio cholerae serotype O1 (strain ATCC 39541 / Classical Ogawa 395 / O395).